The chain runs to 136 residues: Large ribosomal subunit protein uL16 (136 aa).

This sequence belongs to the universal ribosomal protein uL16 family. In terms of assembly, part of the 50S ribosomal subunit.

Its function is as follows. Binds 23S rRNA and is also seen to make contacts with the A and possibly P site tRNAs. This chain is Large ribosomal subunit protein uL16, found in Shigella flexneri.